Consider the following 862-residue polypeptide: DNA mismatch repair protein MutS (862 aa).

618–625 (GPNMGGKS) is an ATP binding site. Residues 799-824 (QLESRDNQASPAVASAPQQQSLSLSP) form a disordered region. The segment covering 806 to 824 (QASPAVASAPQQQSLSLSP) has biased composition (low complexity).

It belongs to the DNA mismatch repair MutS family.

In terms of biological role, this protein is involved in the repair of mismatches in DNA. It is possible that it carries out the mismatch recognition step. This protein has a weak ATPase activity. The polypeptide is DNA mismatch repair protein MutS (Shewanella denitrificans (strain OS217 / ATCC BAA-1090 / DSM 15013)).